Consider the following 2144-residue polypeptide: Reducing polyketide synthase PKS2 (2144 aa).

Residues 10 to 436 enclose the Ketosynthase family 3 (KS3) domain; that stretch reads PMPLAIIGMS…GSNSHCIVRA (427 aa). Active-site for beta-ketoacyl synthase activity residues include Cys183, His319, and His360. A malonyl-CoA:ACP transacylase (MAT) region spans residues 538–855; the sequence is VFAFTGQGAQ…VPSLHRGQNA (318 aa). An N-terminal hotdog fold region spans residues 924 to 1058; sequence HDLLGSINSS…ALVKCEATTD (135 aa). The segment at 924 to 1214 is dehydratase (DH) domain; the sequence is HDLLGSINSS…RSYSIDGTTD (291 aa). The PKS/mFAS DH domain occupies 924-1237; the sequence is HDLLGSINSS…LAVEATLAPQ (314 aa). Residues 1076 to 1237 are C-terminal hotdog fold; it reads HSCVGSPLLY…LAVEATLAPQ (162 aa). The enoyl reductase (ER) domain stretch occupies residues 1461-1747; it reads GMPDSLYLQR…SETDSKKLLL (287 aa). The tract at residues 1771–1948 is ketoreductase (KR) domain; it reads AVYLLVGGSG…PATSLALTAV (178 aa). In terms of domain architecture, Carrier spans 2059-2136; it reads EATQLLLAAI…KIVDSVIVKR (78 aa). At Ser2096 the chain carries O-(pantetheine 4'-phosphoryl)serine.

The protein operates within mycotoxin biosynthesis. Functionally, reducing polyketide synthase (PKS); part of the Tox1A locus, one of the 2 loci that mediate the biosynthesis of T-toxin, a family of linear polyketides 37 to 45 carbons in length, of which the major component is 41 carbons, and which leads to high virulence to maize. One of the PKSs (PKS1 or PKS2) could synthesize a precursor, used subsequently by the other PKS as starter unit, to add additional carbons. Variability in the length of the final carbon backbone C35-47 could be achieved by varying the number of condensation cycles, or use of different starter or extender units or might be due to decarboxylation of the penultimate product, catalyzed by DEC1. Additional proteins are required for the biosynthesis of T-toxin, including oxidoreductases RED1, RED2, RED3, LAM1 and OXI1, as well as esterase TOX9. The sequence is that of Reducing polyketide synthase PKS2 from Cochliobolus heterostrophus (strain C4 / ATCC 48331 / race T) (Southern corn leaf blight fungus).